The following is a 388-amino-acid chain: MNIHEYQGKEIFRSMGVAVPEGRVAFTAEEAVEKAKELNSDVYVVKAQIHAGGRGKAGGVKITKSLSEVETYAKELLGKTLVTHQTGPEGKEIKRLYIEEGCAIQKEYYVGFVIDRATDQVTLMASEEGGTEIEEVAAKTPEKIFKETIDPVIGLSPFQARRIAFNINIPKESVNKAAKFLLALYNVFIEKDCSIVEINPLVTTADGDVLALDAKINFDDNALFRHKDVVELRDLEEEDPKEIEASKHDLSYIALDGDIGCMVNGAGLAMATMDTINHFGGNPANFLDAGGSATREKVTEAFKIILGDENVKGIFVNIFGGIMKCDVIAEGIVEAVKEVDLTLPLVVRLEGTNVELGKKILKDSGLAIEPAATMAEGAQKIVKLVKEA.

In terms of domain architecture, ATP-grasp spans 9 to 244; it reads KEIFRSMGVA…LEEEDPKEIE (236 aa). ATP-binding positions include Lys46, 53–55, Glu99, Cys102, and Glu107; that span reads GRG. Mg(2+) contacts are provided by Asn199 and Asp213. Residues Asn264 and 321–323 contribute to the substrate site; that span reads GIM.

This sequence belongs to the succinate/malate CoA ligase beta subunit family. In terms of assembly, heterotetramer of two alpha and two beta subunits. The cofactor is Mg(2+).

It catalyses the reaction succinate + ATP + CoA = succinyl-CoA + ADP + phosphate. It carries out the reaction GTP + succinate + CoA = succinyl-CoA + GDP + phosphate. It functions in the pathway carbohydrate metabolism; tricarboxylic acid cycle; succinate from succinyl-CoA (ligase route): step 1/1. Succinyl-CoA synthetase functions in the citric acid cycle (TCA), coupling the hydrolysis of succinyl-CoA to the synthesis of either ATP or GTP and thus represents the only step of substrate-level phosphorylation in the TCA. The beta subunit provides nucleotide specificity of the enzyme and binds the substrate succinate, while the binding sites for coenzyme A and phosphate are found in the alpha subunit. The polypeptide is Succinate--CoA ligase [ADP-forming] subunit beta (Staphylococcus aureus (strain MRSA252)).